Here is a 620-residue protein sequence, read N- to C-terminus: KIF-binding protein (620 aa).

Coiled-coil stretches lie at residues 30–64 (YKSK…QDIL) and 133–169 (LIKS…QLQN).

This sequence belongs to the KIF-binding protein family.

Its subcellular location is the cytoplasm. It is found in the cytoskeleton. Activator of KIF1B plus-end-directed microtubule motor activity. Required for organization of axonal microtubules, and axonal outgrowth and maintenance during peripheral and central nervous system development. The sequence is that of KIF-binding protein (kifbp) from Dictyostelium discoideum (Social amoeba).